A 156-amino-acid polypeptide reads, in one-letter code: Cyanate hydratase (156 aa).

Catalysis depends on residues R96, E99, and S122.

Belongs to the cyanase family.

The catalysed reaction is cyanate + hydrogencarbonate + 3 H(+) = NH4(+) + 2 CO2. Its function is as follows. Catalyzes the reaction of cyanate with bicarbonate to produce ammonia and carbon dioxide. The polypeptide is Cyanate hydratase (Escherichia coli O7:K1 (strain IAI39 / ExPEC)).